A 181-amino-acid polypeptide reads, in one-letter code: CDP-archaeol synthase (181 aa).

Transmembrane regions (helical) follow at residues 7–27 (VVWA…AVLA), 55–75 (LIGT…TPSV), 88–108 (LRAG…ASFL), 126–146 (LDFV…WFTE), and 147–167 (TFTL…HVVT).

This sequence belongs to the CDP-archaeol synthase family. Mg(2+) serves as cofactor.

It is found in the cell membrane. It carries out the reaction 2,3-bis-O-(geranylgeranyl)-sn-glycerol 1-phosphate + CTP + H(+) = CDP-2,3-bis-O-(geranylgeranyl)-sn-glycerol + diphosphate. It participates in membrane lipid metabolism; glycerophospholipid metabolism. Catalyzes the formation of CDP-2,3-bis-(O-geranylgeranyl)-sn-glycerol (CDP-archaeol) from 2,3-bis-(O-geranylgeranyl)-sn-glycerol 1-phosphate (DGGGP) and CTP. This reaction is the third ether-bond-formation step in the biosynthesis of archaeal membrane lipids. This chain is CDP-archaeol synthase, found in Haloarcula marismortui (strain ATCC 43049 / DSM 3752 / JCM 8966 / VKM B-1809) (Halobacterium marismortui).